Reading from the N-terminus, the 131-residue chain is Small ribosomal subunit protein uS11 (131 aa).

This sequence belongs to the universal ribosomal protein uS11 family. In terms of assembly, part of the 30S ribosomal subunit. Interacts with proteins S7 and S18. Binds to IF-3.

Located on the platform of the 30S subunit, it bridges several disparate RNA helices of the 16S rRNA. Forms part of the Shine-Dalgarno cleft in the 70S ribosome. The protein is Small ribosomal subunit protein uS11 of Helicobacter pylori (strain Shi470).